Reading from the N-terminus, the 366-residue chain is NAD(P)H-quinone oxidoreductase subunit 1, chloroplastic (366 aa).

7 consecutive transmembrane segments (helical) span residues 28-48, 105-125, 128-148, 250-270, 271-291, 303-323, and 346-366; these read IWLLVPIFTPLLGIIIGVLVI, IAVISILLSYSVIPFGYHLVL, LSIGVFLWIAISSIAPIGLLM, SGIKFGLFYVASYLNLLVSSL, FVTVLYLGGWNLSIPYIFIFI, IFGMTIGIFITLAKAYLFLFI, and FLLPISLGNLLLTTSFQLLSL.

This sequence belongs to the complex I subunit 1 family. NDH is composed of at least 16 different subunits, 5 of which are encoded in the nucleus.

Its subcellular location is the plastid. The protein localises to the chloroplast thylakoid membrane. The enzyme catalyses a plastoquinone + NADH + (n+1) H(+)(in) = a plastoquinol + NAD(+) + n H(+)(out). It catalyses the reaction a plastoquinone + NADPH + (n+1) H(+)(in) = a plastoquinol + NADP(+) + n H(+)(out). NDH shuttles electrons from NAD(P)H:plastoquinone, via FMN and iron-sulfur (Fe-S) centers, to quinones in the photosynthetic chain and possibly in a chloroplast respiratory chain. The immediate electron acceptor for the enzyme in this species is believed to be plastoquinone. Couples the redox reaction to proton translocation, and thus conserves the redox energy in a proton gradient. The protein is NAD(P)H-quinone oxidoreductase subunit 1, chloroplastic of Nandina domestica (Heavenly bamboo).